We begin with the raw amino-acid sequence, 157 residues long: 3-dehydroquinate dehydratase (157 aa).

Tyr-24 (proton acceptor) is an active-site residue. Residues Asn-75, His-81, and Asp-88 each coordinate substrate. His-101 (proton donor) is an active-site residue. Substrate is bound by residues 102 to 103 (LS) and Arg-112.

It belongs to the type-II 3-dehydroquinase family. Homododecamer.

It carries out the reaction 3-dehydroquinate = 3-dehydroshikimate + H2O. It functions in the pathway metabolic intermediate biosynthesis; chorismate biosynthesis; chorismate from D-erythrose 4-phosphate and phosphoenolpyruvate: step 3/7. Catalyzes a trans-dehydration via an enolate intermediate. This Brucella abortus (strain S19) protein is 3-dehydroquinate dehydratase.